The sequence spans 207 residues: Protein ERP4 (207 aa).

The first 21 residues, M1–S21, serve as a signal peptide directing secretion. At S22–T174 the chain is on the lumenal side. Residues K36–K118 enclose the GOLD domain. The helical transmembrane segment at W175 to I195 threads the bilayer. At Q196–V207 the chain is on the cytoplasmic side.

Belongs to the EMP24/GP25L family.

The protein localises to the endoplasmic reticulum membrane. Involved in vesicular protein trafficking. The polypeptide is Protein ERP4 (ERP4) (Saccharomyces cerevisiae (strain ATCC 204508 / S288c) (Baker's yeast)).